Here is a 260-residue protein sequence, read N- to C-terminus: Thiazole synthase (260 aa).

Residue Lys-96 is the Schiff-base intermediate with DXP of the active site. 1-deoxy-D-xylulose 5-phosphate contacts are provided by residues Gly-157, 184–185 (AG), and 206–207 (NT).

The protein belongs to the ThiG family. Homotetramer. Forms heterodimers with either ThiH or ThiS.

The protein localises to the cytoplasm. The catalysed reaction is [ThiS sulfur-carrier protein]-C-terminal-Gly-aminoethanethioate + 2-iminoacetate + 1-deoxy-D-xylulose 5-phosphate = [ThiS sulfur-carrier protein]-C-terminal Gly-Gly + 2-[(2R,5Z)-2-carboxy-4-methylthiazol-5(2H)-ylidene]ethyl phosphate + 2 H2O + H(+). Its pathway is cofactor biosynthesis; thiamine diphosphate biosynthesis. Catalyzes the rearrangement of 1-deoxy-D-xylulose 5-phosphate (DXP) to produce the thiazole phosphate moiety of thiamine. Sulfur is provided by the thiocarboxylate moiety of the carrier protein ThiS. In vitro, sulfur can be provided by H(2)S. The polypeptide is Thiazole synthase (Bradyrhizobium diazoefficiens (strain JCM 10833 / BCRC 13528 / IAM 13628 / NBRC 14792 / USDA 110)).